A 319-amino-acid chain; its full sequence is HTH-type transcriptional regulator YidZ (319 aa).

The HTH lysR-type domain occupies 8 to 65; that stretch reads LDLNLLLCLQLLMQERSVTKAAKRINVTPSAVSKSLAKLRAWFDDPLFVNSPLGLSPT. Residues 25-44 constitute a DNA-binding region (H-T-H motif); that stretch reads VTKAAKRINVTPSAVSKSLA.

Belongs to the LysR transcriptional regulatory family.

Functionally, involved in anaerobic NO protection. In Escherichia coli (strain K12 / MC4100 / BW2952), this protein is HTH-type transcriptional regulator YidZ.